The primary structure comprises 381 residues: Succinyl-diaminopimelate desuccinylase (381 aa).

H72 is a binding site for Zn(2+). D74 is a catalytic residue. Residue D105 participates in Zn(2+) binding. E139 functions as the Proton acceptor in the catalytic mechanism. Zn(2+) is bound by residues E140, E168, and H354.

Belongs to the peptidase M20A family. DapE subfamily. In terms of assembly, homodimer. Zn(2+) is required as a cofactor. The cofactor is Co(2+).

It catalyses the reaction N-succinyl-(2S,6S)-2,6-diaminopimelate + H2O = (2S,6S)-2,6-diaminopimelate + succinate. The protein operates within amino-acid biosynthesis; L-lysine biosynthesis via DAP pathway; LL-2,6-diaminopimelate from (S)-tetrahydrodipicolinate (succinylase route): step 3/3. Functionally, catalyzes the hydrolysis of N-succinyl-L,L-diaminopimelic acid (SDAP), forming succinate and LL-2,6-diaminopimelate (DAP), an intermediate involved in the bacterial biosynthesis of lysine and meso-diaminopimelic acid, an essential component of bacterial cell walls. In Shewanella sp. (strain MR-4), this protein is Succinyl-diaminopimelate desuccinylase.